Reading from the N-terminus, the 195-residue chain is CASP-like protein Os03g0196400 (195 aa).

The Cytoplasmic segment spans residues 1 to 38; sequence MRQQQAGGVGDGVSPGNVPVCYYGPGGRVPSSLERRAR. The helical transmembrane segment at 39-59 threads the bilayer; it reads AAEVLLRCAACGLAVLAAALL. Topologically, residues 60–81 are extracellular; that stretch reads GADRQTRVFFSIQKVARYTDMQ. The helical transmembrane segment at 82-102 threads the bilayer; the sequence is SLVLLVIANGMAACYSLIQCA. Over 103-104 the chain is Cytoplasmic; it reads RC. Residues 105 to 125 form a helical membrane-spanning segment; it reads LVMAYIVISAVAAAMEAALIG. The Extracellular segment spans residues 126 to 150; that stretch reads KYGQPEFQWMKTCHLYKRFCAQAGG. Residues 151 to 171 form a helical membrane-spanning segment; that stretch reads GVACAIAASVNMVGVALISAF. At 172–195 the chain is on the cytoplasmic side; it reads NLFRLYGNSNGGGKATTTTMAGGK.

This sequence belongs to the Casparian strip membrane proteins (CASP) family. As to quaternary structure, homodimer and heterodimers.

Its subcellular location is the cell membrane. This is CASP-like protein Os03g0196400 from Oryza sativa subsp. japonica (Rice).